The following is a 551-amino-acid chain: Gliomedin (551 aa).

At 1–17 (MARGAEGGRGDAGWGLR) the chain is on the cytoplasmic side. The chain crosses the membrane as a helical; Signal-anchor for type II membrane protein span at residues 18–39 (GALAAVALLSALNAAGTVFALC). The Extracellular segment spans residues 40 to 551 (QWRGLSSALR…VQFLSTTLNQ (512 aa)). Residues 72 to 107 (LSRAPRGASAPPQDPASSARNKRSHSGEPAPHIRAE) are disordered. The span at 79 to 90 (ASAPPQDPASSA) shows a compositional bias: low complexity. The N-linked (GlcNAc...) asparagine glycan is linked to asparagine 130. Collagen-like domains follow at residues 137–195 (LTGP…RGEK) and 196–222 (GDHGELGLQGNEGPPGQKGEKGDKGDV). Residues 139–282 (GPSGPPGPPG…GETCAIPNDD (144 aa)) are disordered. Basic and acidic residues-rich tracts occupy residues 191–200 (ERGEKGDHGE) and 213–222 (KGEKGDKGDV). Pro residues predominate over residues 237 to 253 (PPGPPGPPGPPGPPGPP). Residues 299–546 (QAESMITSIG…LMLYPVQFLS (248 aa)) form the Olfactomedin-like domain. N-linked (GlcNAc...) asparagine glycans are attached at residues asparagine 329, asparagine 357, asparagine 378, and asparagine 464.

Homotrimer (via collagen-like domains). Interacts with NRCAM and NFASC/neurofascin. Interaction with glial NRCAM enhances interaction with axonal NFASC. Interacts with MYOC. N-glycosylated. In terms of processing, proteolytic processing by a furin-like protease causes shedding of the ectodomain. Further cleavage by BMP1 releases the olfactomedin-like domain. Specifically expressed in spinal cord, brain, placenta and sciatic nerve. More abundant in peripheral than central nervous system.

The protein localises to the cell membrane. The protein resides in the cell projection. It is found in the axon. It localises to the secreted. Its subcellular location is the extracellular space. The protein localises to the extracellular matrix. Ligand for NRCAM and NFASC/neurofascin that plays a role in the formation and maintenance of the nodes of Ranvier on myelinated axons. Mediates interaction between Schwann cell microvilli and axons via its interactions with NRCAM and NFASC. Nodes of Ranvier contain clustered sodium channels that are crucial for the saltatory propagation of action potentials along myelinated axons. During development, nodes of Ranvier are formed by the fusion of two heminodes. Required for normal clustering of sodium channels at heminodes; not required for the formation of mature nodes with normal sodium channel clusters. Required, together with NRCAM, for maintaining NFASC and sodium channel clusters at mature nodes of Ranvier. In Homo sapiens (Human), this protein is Gliomedin (GLDN).